Here is a 940-residue protein sequence, read N- to C-terminus: Valine--tRNA ligase (940 aa).

Residues 47-57 carry the 'HIGH' region motif; the sequence is PNVTGILHMGH. The 'KMSKS' region motif lies at 564–568; the sequence is KLSKS. An ATP-binding site is contributed by Lys567. The stretch at 872 to 938 forms a coiled coil; it reads PIEQITKEKN…LQSILDKLAS (67 aa).

Belongs to the class-I aminoacyl-tRNA synthetase family. ValS type 1 subfamily. As to quaternary structure, monomer.

Its subcellular location is the cytoplasm. It catalyses the reaction tRNA(Val) + L-valine + ATP = L-valyl-tRNA(Val) + AMP + diphosphate. Functionally, catalyzes the attachment of valine to tRNA(Val). As ValRS can inadvertently accommodate and process structurally similar amino acids such as threonine, to avoid such errors, it has a 'posttransfer' editing activity that hydrolyzes mischarged Thr-tRNA(Val) in a tRNA-dependent manner. This is Valine--tRNA ligase from Chlamydia felis (strain Fe/C-56) (Chlamydophila felis).